We begin with the raw amino-acid sequence, 430 residues long: tRNA(Ile)-lysidine synthase (430 aa).

An ATP-binding site is contributed by serine 24–serine 29.

The protein belongs to the tRNA(Ile)-lysidine synthase family.

The protein resides in the cytoplasm. It carries out the reaction cytidine(34) in tRNA(Ile2) + L-lysine + ATP = lysidine(34) in tRNA(Ile2) + AMP + diphosphate + H(+). Ligates lysine onto the cytidine present at position 34 of the AUA codon-specific tRNA(Ile) that contains the anticodon CAU, in an ATP-dependent manner. Cytidine is converted to lysidine, thus changing the amino acid specificity of the tRNA from methionine to isoleucine. The polypeptide is tRNA(Ile)-lysidine synthase (Haemophilus influenzae (strain ATCC 51907 / DSM 11121 / KW20 / Rd)).